The following is a 440-amino-acid chain: Histidinol dehydrogenase (440 aa).

NAD(+) is bound by residues Y136, Q197, and N220. Substrate is bound by residues S243, Q265, and H268. Zn(2+)-binding residues include Q265 and H268. Residues E333 and H334 each act as proton acceptor in the active site. 4 residues coordinate substrate: H334, D367, E421, and H426. D367 contributes to the Zn(2+) binding site. H426 serves as a coordination point for Zn(2+).

This sequence belongs to the histidinol dehydrogenase family. Zn(2+) is required as a cofactor.

It carries out the reaction L-histidinol + 2 NAD(+) + H2O = L-histidine + 2 NADH + 3 H(+). It functions in the pathway amino-acid biosynthesis; L-histidine biosynthesis; L-histidine from 5-phospho-alpha-D-ribose 1-diphosphate: step 9/9. In terms of biological role, catalyzes the sequential NAD-dependent oxidations of L-histidinol to L-histidinaldehyde and then to L-histidine. The protein is Histidinol dehydrogenase of Pseudomonas aeruginosa (strain ATCC 15692 / DSM 22644 / CIP 104116 / JCM 14847 / LMG 12228 / 1C / PRS 101 / PAO1).